The chain runs to 184 residues: Shikimate kinase (184 aa).

An ATP-binding site is contributed by 17–22 (GAGKTT). A Mg(2+)-binding site is contributed by Thr-21. Residues Asp-39, Arg-63, and Gly-85 each contribute to the substrate site. An ATP-binding site is contributed by Arg-123. Arg-142 is a binding site for substrate.

Belongs to the shikimate kinase family. Monomer. Mg(2+) is required as a cofactor.

The protein resides in the cytoplasm. The enzyme catalyses shikimate + ATP = 3-phosphoshikimate + ADP + H(+). It participates in metabolic intermediate biosynthesis; chorismate biosynthesis; chorismate from D-erythrose 4-phosphate and phosphoenolpyruvate: step 5/7. Functionally, catalyzes the specific phosphorylation of the 3-hydroxyl group of shikimic acid using ATP as a cosubstrate. The sequence is that of Shikimate kinase from Burkholderia pseudomallei (strain 1710b).